The primary structure comprises 477 residues: MSAVLKPTPTHDHHVADLSLADWGRKEIKIAETEMPGLMAIRQEFAASQPLKGARITGSLHMTIQTAVLVETLQALGAQVRWASCNIFSTQDHAAAALVAAGTPVFAYKGETLTDYWDYTHRIFDFGAKGTDGEGPNMILDDGGDATLLMHLGQKAEKDPSVISKPTSEEETCLFAAIKAKLAQDPTWYTRKSAQIIGVTEETTTGVHRLNEMSAKGTLLFRAINVNDSVTKSKFDNLYGCRESLVDSIKRATDVMIAGKVACVAGYGDVGKGSAQALRALSAQVWVTEIDPINALQAAMEGYKVVTMEYAADKADIFVSATGNKNVIRYEHMAAMKDEAIVCNIGHFDNEIDVASLEKLKWDEIKPQVDHVVFPDGKKITLLAKGRLVNLGCATGHPSFVMSSSFANQTIAQIELFTKSADYQVGKVYVLPKHLDEKVARLHLKKVGAMLTELTDEQAAYIGVSKSGPYKADTYRY.

Substrate-binding residues include Thr-63, Asp-142, and Glu-202. 203–205 provides a ligand contact to NAD(+); it reads TTT. 2 residues coordinate substrate: Lys-232 and Asp-236. Residues Asn-237, 266 to 271, Glu-289, Asn-324, 345 to 347, and Asn-390 contribute to the NAD(+) site; these read GYGDVG and IGH.

The protein belongs to the adenosylhomocysteinase family. It depends on NAD(+) as a cofactor.

It is found in the cytoplasm. It carries out the reaction S-adenosyl-L-homocysteine + H2O = L-homocysteine + adenosine. Its pathway is amino-acid biosynthesis; L-homocysteine biosynthesis; L-homocysteine from S-adenosyl-L-homocysteine: step 1/1. Functionally, may play a key role in the regulation of the intracellular concentration of adenosylhomocysteine. In Methylibium petroleiphilum (strain ATCC BAA-1232 / LMG 22953 / PM1), this protein is Adenosylhomocysteinase.